A 303-amino-acid chain; its full sequence is Mitochondrial substrate carrier family protein E (303 aa).

Over 1-8 (MENKKESS) the chain is Mitochondrial intermembrane. Solcar repeat units lie at residues 6 to 93 (ESSL…SKQW), 104 to 197 (ESTI…CKST), and 210 to 298 (LPIP…LKYL). A helical membrane pass occupies residues 9-29 (LLYILTGATSGLLADSIMHPV). The Mitochondrial matrix portion of the chain corresponds to 30-67 (DTVRARVQIEKVGKSQYKGTFNALNQIIKNEGVSYLYK). Residues 68–88 (GFPIVATATVPAHALYFLGYE) form a helical membrane-spanning segment. Residues 89-109 (YSKQWVTDRYGKKWGESTITH) lie on the Mitochondrial intermembrane side of the membrane. A helical transmembrane segment spans residues 110 to 130 (FSAGFVADALGSLIWVPMDII). The Mitochondrial matrix segment spans residues 131–171 (KQRLQVQTNTQKLNPNQTYYKGSFHAGKIILQEEGIRGLYR). Residues 172–192 (GFMPALATYGPFVGIYFSVYE) form a helical membrane-spanning segment. The Mitochondrial intermembrane portion of the chain corresponds to 193-215 (KCKSTISSLLSKEKDQYLPIPYQ). The helical transmembrane segment at 216–236 (LGSGFFAGAFAAAVTCPLDVI) threads the bilayer. Residues 237-268 (KTRIQVQRSTEKQIYKGMWDSFKTILKEEGPK) are Mitochondrial matrix-facing. A helical transmembrane segment spans residues 269–289 (AFVKGMGARIWWIAPGNALTI). The Mitochondrial intermembrane segment spans residues 290–303 (ASYEQLKYLFKDLI).

Belongs to the mitochondrial carrier (TC 2.A.29) family.

It is found in the mitochondrion inner membrane. Its function is as follows. Mitochondrial solute carriers shuttle metabolites, nucleotides, and cofactors through the mitochondrial inner membrane. This chain is Mitochondrial substrate carrier family protein E (mcfE), found in Dictyostelium discoideum (Social amoeba).